We begin with the raw amino-acid sequence, 443 residues long: ATP-dependent protease ATPase subunit HslU (443 aa).

ATP is bound by residues Ile-18, 60–65 (GVGKTE), Asp-256, Glu-321, and Arg-393.

The protein belongs to the ClpX chaperone family. HslU subfamily. In terms of assembly, a double ring-shaped homohexamer of HslV is capped on each side by a ring-shaped HslU homohexamer. The assembly of the HslU/HslV complex is dependent on binding of ATP.

It localises to the cytoplasm. In terms of biological role, ATPase subunit of a proteasome-like degradation complex; this subunit has chaperone activity. The binding of ATP and its subsequent hydrolysis by HslU are essential for unfolding of protein substrates subsequently hydrolyzed by HslV. HslU recognizes the N-terminal part of its protein substrates and unfolds these before they are guided to HslV for hydrolysis. The protein is ATP-dependent protease ATPase subunit HslU of Escherichia coli O139:H28 (strain E24377A / ETEC).